A 138-amino-acid chain; its full sequence is Large ribosomal subunit protein uL16 (138 aa).

This sequence belongs to the universal ribosomal protein uL16 family. In terms of assembly, part of the 50S ribosomal subunit.

Binds 23S rRNA and is also seen to make contacts with the A and possibly P site tRNAs. In Gluconacetobacter diazotrophicus (strain ATCC 49037 / DSM 5601 / CCUG 37298 / CIP 103539 / LMG 7603 / PAl5), this protein is Large ribosomal subunit protein uL16.